Here is a 373-residue protein sequence, read N- to C-terminus: Anhydro-N-acetylmuramic acid kinase (373 aa).

ATP is bound at residue 13–20 (GTSMDGID).

This sequence belongs to the anhydro-N-acetylmuramic acid kinase family.

It carries out the reaction 1,6-anhydro-N-acetyl-beta-muramate + ATP + H2O = N-acetyl-D-muramate 6-phosphate + ADP + H(+). The protein operates within amino-sugar metabolism; 1,6-anhydro-N-acetylmuramate degradation. Its pathway is cell wall biogenesis; peptidoglycan recycling. Functionally, catalyzes the specific phosphorylation of 1,6-anhydro-N-acetylmuramic acid (anhMurNAc) with the simultaneous cleavage of the 1,6-anhydro ring, generating MurNAc-6-P. Is required for the utilization of anhMurNAc either imported from the medium or derived from its own cell wall murein, and thus plays a role in cell wall recycling. This chain is Anhydro-N-acetylmuramic acid kinase, found in Agrobacterium fabrum (strain C58 / ATCC 33970) (Agrobacterium tumefaciens (strain C58)).